A 151-amino-acid polypeptide reads, in one-letter code: UPF0756 membrane protein Hore_21770 (151 aa).

Helical transmembrane passes span 7–29 (LLIITILGFLARSRVLVIAGLLL), 49–69 (IEIGLIFLLMAILSSLVLSPV), 84–104 (TVAIIAGVLATKFNGMGLDLL), 110–130 (FILGIIMGSLVGIVFFGGIPV), and 131–151 (GPLMAAGIGAVLFKIIEIIKG).

The protein belongs to the UPF0756 family.

The protein resides in the cell membrane. This chain is UPF0756 membrane protein Hore_21770, found in Halothermothrix orenii (strain H 168 / OCM 544 / DSM 9562).